Consider the following 185-residue polypeptide: Intraflagellar transport protein 22 homolog (185 aa).

Residues 10–17 (GPCESGKT), 63–67 (DCGGD), and 123–126 (HKPG) contribute to the GTP site. Serine 137 carries the phosphoserine modification.

This sequence belongs to the small GTPase superfamily. Rab family. In terms of assembly, component of the IFT complex B, at least composed of IFT20, IFT22, IFT25, IFT27, IFT46, IFT52, TRAF3IP1/IFT54, IFT57, IFT74, IFT80, IFT81, and IFT88. Interacts with IFT88. Interacts with CFAP61.

It localises to the cell projection. Its subcellular location is the cilium. Small GTPase-like component of the intraflagellar transport (IFT) complex B. In Macaca fascicularis (Crab-eating macaque), this protein is Intraflagellar transport protein 22 homolog (IFT22).